The primary structure comprises 430 residues: C4-dicarboxylate transport protein (430 aa).

The next 9 helical transmembrane spans lie at 8 to 28, 44 to 64, 76 to 96, 144 to 164, 184 to 204, 222 to 242, 289 to 309, 326 to 346, and 352 to 372; these read SLYF…HFYP, LIKM…IAGM, IALL…LVIV, AFAS…GFAL, VIFG…FGAM, LIIC…GSIA, VVGL…SIYL, VIHQ…AAGV, and IVLA…LALI.

Belongs to the dicarboxylate/amino acid:cation symporter (DAACS) (TC 2.A.23) family.

It localises to the cell inner membrane. In terms of biological role, responsible for the transport of dicarboxylates such as succinate, fumarate, and malate from the periplasm across the membrane. The sequence is that of C4-dicarboxylate transport protein from Yersinia enterocolitica serotype O:8 / biotype 1B (strain NCTC 13174 / 8081).